The primary structure comprises 173 residues: Calcium-binding protein 5 (173 aa).

EF-hand domains follow at residues 28-63 (DEIEELREAFLEFDKDRDGFISCKDLGNLMRTMGYM), 82-99 (GRVDFDDFVELMTPKLLA), 105-140 (IGVQEMRDAFKEFDTNGDGEITLVELQQAMQRLLGE), and 142-173 (LTPREISEVVREADVNGDGTVDFEEFVKMMSR). Ca(2+)-binding residues include D41, D43, D45, and D52. Residues D118, N120, D122, E124, E129, D155, N157, D159, T161, and E166 each contribute to the Ca(2+) site.

As to quaternary structure, interacts with CACNA1C (via C-terminal CDB motif) in a calcium-dependent manner. Interacts with STXBP1. Interacts with MYO6. In terms of tissue distribution, retina.

Its subcellular location is the cytoplasm. Functionally, inhibits calcium-dependent inactivation of L-type calcium channel and shifts voltage dependence of activation to more depolarized membrane potentials. Involved in the transmission of light signals. May positively regulate neurotransmitter vesicle endocytosis and exocytosis in a salt-dependent manner. May play a role in the extension and network organization of neurites. This chain is Calcium-binding protein 5 (CABP5), found in Homo sapiens (Human).